Here is a 714-residue protein sequence, read N- to C-terminus: Polyribonucleotide nucleotidyltransferase (714 aa).

Mg(2+) is bound by residues Asp490 and Asp496. The 60-residue stretch at 556-615 (PRIETMQIPTDKIREVIGSGGKVIREIVEVSGAKVDINDDGIIKIASPNGDSIKKAYDMI) folds into the KH domain. The region spanning 625 to 693 (GQVYTGKVVK…DRGKVRLSMK (69 aa)) is the S1 motif domain.

Belongs to the polyribonucleotide nucleotidyltransferase family. It depends on Mg(2+) as a cofactor.

It is found in the cytoplasm. The enzyme catalyses RNA(n+1) + phosphate = RNA(n) + a ribonucleoside 5'-diphosphate. Its function is as follows. Involved in mRNA degradation. Catalyzes the phosphorolysis of single-stranded polyribonucleotides processively in the 3'- to 5'-direction. The polypeptide is Polyribonucleotide nucleotidyltransferase (Ruegeria pomeroyi (strain ATCC 700808 / DSM 15171 / DSS-3) (Silicibacter pomeroyi)).